The primary structure comprises 155 residues: MSEQNNTEMNFQLLRIYTKDISFEAPNAPHVFQKDWQPEVKLDLDTASSQLADDVYEVVLRVTVTASLGEETAFLCEVQQAGIFNISGIEGTQMAHCLGAYCPNSLFPYARECITNLVSRGTFPQLNLAPVNFDALFMNYLQQQAAEGAPNHQDA.

It belongs to the SecB family. In terms of assembly, homotetramer, a dimer of dimers. One homotetramer interacts with 1 SecA dimer.

It localises to the cytoplasm. Functionally, one of the proteins required for the normal export of preproteins out of the cell cytoplasm. It is a molecular chaperone that binds to a subset of precursor proteins, maintaining them in a translocation-competent state. It also specifically binds to its receptor SecA. This chain is Protein-export protein SecB, found in Cronobacter sakazakii (strain ATCC BAA-894) (Enterobacter sakazakii).